A 652-amino-acid chain; its full sequence is Type III restriction-modification enzyme StyLTI Mod subunit (652 aa).

The binding of S-adenosyl methionine stretch occupies residues 135–138 (DPPY).

The protein belongs to the N(4)/N(6)-methyltransferase family. In terms of assembly, homodimer, also forms a functional restriction-competent complex with Res.

The enzyme catalyses a 2'-deoxyadenosine in DNA + S-adenosyl-L-methionine = an N(6)-methyl-2'-deoxyadenosine in DNA + S-adenosyl-L-homocysteine + H(+). A beta subtype methylase that binds the system-specific DNA recognition site 5'-CAGAG-3' and methylates A-4 (of only 1 strand as the other does not have an A residue). DNA restriction requires both the Res and Mod subunits. The sequence is that of Type III restriction-modification enzyme StyLTI Mod subunit from Salmonella typhimurium (strain LT2 / SGSC1412 / ATCC 700720).